Here is a 185-residue protein sequence, read N- to C-terminus: Ribosome-recycling factor (185 aa).

Belongs to the RRF family.

Its subcellular location is the cytoplasm. In terms of biological role, responsible for the release of ribosomes from messenger RNA at the termination of protein biosynthesis. May increase the efficiency of translation by recycling ribosomes from one round of translation to another. The protein is Ribosome-recycling factor of Desulforapulum autotrophicum (strain ATCC 43914 / DSM 3382 / VKM B-1955 / HRM2) (Desulfobacterium autotrophicum).